The following is a 311-amino-acid chain: Aspartate carbamoyltransferase catalytic subunit (311 aa).

Positions 55 and 56 each coordinate carbamoyl phosphate. Lysine 85 lines the L-aspartate pocket. Arginine 106, histidine 135, and glutamine 138 together coordinate carbamoyl phosphate. L-aspartate is bound by residues arginine 168 and arginine 230. Leucine 268 and proline 269 together coordinate carbamoyl phosphate.

This sequence belongs to the aspartate/ornithine carbamoyltransferase superfamily. ATCase family. Heterododecamer (2C3:3R2) of six catalytic PyrB chains organized as two trimers (C3), and six regulatory PyrI chains organized as three dimers (R2).

It carries out the reaction carbamoyl phosphate + L-aspartate = N-carbamoyl-L-aspartate + phosphate + H(+). It participates in pyrimidine metabolism; UMP biosynthesis via de novo pathway; (S)-dihydroorotate from bicarbonate: step 2/3. In terms of biological role, catalyzes the condensation of carbamoyl phosphate and aspartate to form carbamoyl aspartate and inorganic phosphate, the committed step in the de novo pyrimidine nucleotide biosynthesis pathway. In Baumannia cicadellinicola subsp. Homalodisca coagulata, this protein is Aspartate carbamoyltransferase catalytic subunit.